Here is a 497-residue protein sequence, read N- to C-terminus: Probable cytosol aminopeptidase (497 aa).

The Mn(2+) site is built by lysine 263 and aspartate 268. The active site involves lysine 275. Aspartate 286, aspartate 345, and glutamate 347 together coordinate Mn(2+). Residue arginine 349 is part of the active site.

The protein belongs to the peptidase M17 family. It depends on Mn(2+) as a cofactor.

The protein resides in the cytoplasm. It carries out the reaction Release of an N-terminal amino acid, Xaa-|-Yaa-, in which Xaa is preferably Leu, but may be other amino acids including Pro although not Arg or Lys, and Yaa may be Pro. Amino acid amides and methyl esters are also readily hydrolyzed, but rates on arylamides are exceedingly low.. It catalyses the reaction Release of an N-terminal amino acid, preferentially leucine, but not glutamic or aspartic acids.. Presumably involved in the processing and regular turnover of intracellular proteins. Catalyzes the removal of unsubstituted N-terminal amino acids from various peptides. The chain is Probable cytosol aminopeptidase from Brucella suis biovar 1 (strain 1330).